Reading from the N-terminus, the 120-residue chain is NAD(P)H-quinone oxidoreductase subunit 3, chloroplastic (120 aa).

3 helical membrane passes run 9–29 (IFWV…LISG), 64–84 (MFAL…PWAM), and 88–108 (VLGV…IVGL).

The protein belongs to the complex I subunit 3 family. NDH is composed of at least 16 different subunits, 5 of which are encoded in the nucleus.

It is found in the plastid. Its subcellular location is the chloroplast thylakoid membrane. It catalyses the reaction a plastoquinone + NADH + (n+1) H(+)(in) = a plastoquinol + NAD(+) + n H(+)(out). The enzyme catalyses a plastoquinone + NADPH + (n+1) H(+)(in) = a plastoquinol + NADP(+) + n H(+)(out). In terms of biological role, NDH shuttles electrons from NAD(P)H:plastoquinone, via FMN and iron-sulfur (Fe-S) centers, to quinones in the photosynthetic chain and possibly in a chloroplast respiratory chain. The immediate electron acceptor for the enzyme in this species is believed to be plastoquinone. Couples the redox reaction to proton translocation, and thus conserves the redox energy in a proton gradient. This Cucumis sativus (Cucumber) protein is NAD(P)H-quinone oxidoreductase subunit 3, chloroplastic.